The chain runs to 349 residues: UDP-3-O-acylglucosamine N-acyltransferase (349 aa).

His-246 serves as the catalytic Proton acceptor.

It belongs to the transferase hexapeptide repeat family. LpxD subfamily. As to quaternary structure, homotrimer.

It carries out the reaction a UDP-3-O-[(3R)-3-hydroxyacyl]-alpha-D-glucosamine + a (3R)-hydroxyacyl-[ACP] = a UDP-2-N,3-O-bis[(3R)-3-hydroxyacyl]-alpha-D-glucosamine + holo-[ACP] + H(+). Its pathway is bacterial outer membrane biogenesis; LPS lipid A biosynthesis. Its function is as follows. Catalyzes the N-acylation of UDP-3-O-acylglucosamine using 3-hydroxyacyl-ACP as the acyl donor. Is involved in the biosynthesis of lipid A, a phosphorylated glycolipid that anchors the lipopolysaccharide to the outer membrane of the cell. The polypeptide is UDP-3-O-acylglucosamine N-acyltransferase (Nostoc sp. (strain PCC 7120 / SAG 25.82 / UTEX 2576)).